Here is a 130-residue protein sequence, read N- to C-terminus: Universal stress protein MSMEG_4207 (130 aa).

Lys-104 bears the N6-acetyllysine mark.

The protein belongs to the universal stress protein A family. Post-translationally, acetylated on Lys-104 by PatA in the presence of acetyl-CoA as an acetyl donor.

In Mycolicibacterium smegmatis (strain ATCC 700084 / mc(2)155) (Mycobacterium smegmatis), this protein is Universal stress protein MSMEG_4207.